A 428-amino-acid polypeptide reads, in one-letter code: C4-dicarboxylate transport protein (428 aa).

The next 9 membrane-spanning stretches (helical) occupy residues 4–24, 44–64, 76–96, 142–162, 184–204, 222–242, 289–309, 326–346, and 352–372; these read SLFK…ILLG, LIKM…IAGM, VALL…LIIV, IGAF…LFGF, VIFG…FGAM, LIIC…GTIA, VVGL…SIYL, IFHQ…AAGV, and IVLA…LALI.

This sequence belongs to the dicarboxylate/amino acid:cation symporter (DAACS) (TC 2.A.23) family.

It is found in the cell inner membrane. In terms of biological role, responsible for the transport of dicarboxylates such as succinate, fumarate, and malate from the periplasm across the membrane. In Salmonella arizonae (strain ATCC BAA-731 / CDC346-86 / RSK2980), this protein is C4-dicarboxylate transport protein.